The primary structure comprises 774 residues: Transcription factor MBS1 (774 aa).

An HTH APSES-type domain is found at 37 to 143; the sequence is EITFYDSGVP…YVPTSVSPPP (107 aa). The segment at residues 68–89 is a DNA-binding region (H-T-H motif); the sequence is ATQILKVAGFDKPQRTRVLERE. 2 disordered regions span residues 135–180 and 209–229; these read VPTS…SAAA and RVSL…VASV. Residues 155 to 165 show a composition bias toward basic and acidic residues; sequence ARRDKEKETGR. The span at 166–176 shows a compositional bias: polar residues; the sequence is TKATPSRTGPT. 2 ANK repeats span residues 348–377 and 467–496; these read DGHT…SIFA and EGET…NPKI. The disordered stretch occupies residues 752 to 774; it reads EEENDNQVYNTSAGESGPSSWVQ. A compositionally biased stretch (polar residues) spans 757-774; that stretch reads NQVYNTSAGESGPSSWVQ.

The protein resides in the nucleus. Transcription factor that positively regulates ergosterol biosynthesis and thereby affects polyene and azole drug susceptibility. Plays a role in maintenance of membrane stability and osmotic stress response. Involved in genotoxic and oxidative stress responses. Also promotes production of melanin and capsule and thereby is required for full virulence. The sequence is that of Transcription factor MBS1 from Cryptococcus neoformans var. grubii serotype A (strain H99 / ATCC 208821 / CBS 10515 / FGSC 9487) (Filobasidiella neoformans var. grubii).